The chain runs to 275 residues: 2,3,4,5-tetrahydropyridine-2,6-dicarboxylate N-succinyltransferase (275 aa).

Belongs to the transferase hexapeptide repeat family.

Its subcellular location is the cytoplasm. The catalysed reaction is (S)-2,3,4,5-tetrahydrodipicolinate + succinyl-CoA + H2O = (S)-2-succinylamino-6-oxoheptanedioate + CoA. Its pathway is amino-acid biosynthesis; L-lysine biosynthesis via DAP pathway; LL-2,6-diaminopimelate from (S)-tetrahydrodipicolinate (succinylase route): step 1/3. The polypeptide is 2,3,4,5-tetrahydropyridine-2,6-dicarboxylate N-succinyltransferase (Burkholderia multivorans (strain ATCC 17616 / 249)).